The chain runs to 575 residues: Sodium/hydrogen exchanger 8 (575 aa).

11 consecutive transmembrane segments (helical) span residues 54-74, 78-98, 117-137, 150-170, 185-205, 255-275, 305-325, 348-368, 373-393, 411-431, and 445-465; these read MTIF…HLLI, LHFL…GAVI, PNMF…YSLH, LFAV…IYFL, FAFG…IFNA, LGYF…TGLI, GLAE…GIVM, VAFL…FSFP, ISFV…NIFP, MFIM…SLHL, and TTII…MPLI. Thr-504 carries the phosphothreonine modification. 2 positions are modified to phosphoserine: Ser-565 and Ser-567.

The protein belongs to the monovalent cation:proton antiporter 1 (CPA1) transporter (TC 2.A.36) family. As to expression, intestine and kidneys.

The protein localises to the golgi apparatus membrane. It is found in the golgi apparatus. It localises to the trans-Golgi network membrane. Its subcellular location is the endosome. The protein resides in the multivesicular body membrane. The protein localises to the apical cell membrane. It is found in the cytoplasmic vesicle. It localises to the secretory vesicle. Its subcellular location is the acrosome. The enzyme catalyses Na(+)(in) + H(+)(out) = Na(+)(out) + H(+)(in). With respect to regulation, expression and activity are regulated by acid media by increasing the rate of trafficking to the apical membrane. Inhibited by HOE694 and S3226. In terms of biological role, na(+)/H(+) antiporter. Mediates the electoneutral exchange of intracellular H(+) ions for extracellular Na(+) in 1:1 stoichiometry. Acts as an Na(+)/H(+) exchanger in the trans-Golgi. Contributes to the regulation of pH regulation of Golgi apparatus, and consequently, in protein trafficking and endosomal morphology. In germ cells, plays a crucial role in acrosome biogenesis and sperm development, probably by playing a role in the fusion of the Golgi-derived vesicles that form the acrosomal cap. Can also be active at the cell surface of specialized cells. In the small intestine, at the cell membrane, plays a major physiological role in transepithelial absorption of Na(+) and regulates intracellular pH homeostasis of intestinal epithelial cells. Acts as an important regulator of mucosal integrity in the intestine and in the stomach, could mediate the pH fluctuation necessary for mucin exocytosis or assist membrane trafficking of other proteins. Plays a role in photoreceptor survival and in the maintenance of intracellular pH homeostasis in retinal pigment epithelium (RPE cells). The protein is Sodium/hydrogen exchanger 8 (Slc9a8) of Rattus norvegicus (Rat).